The primary structure comprises 648 residues: MEFIVSLLLLSPALVAGSLHSRIDNGLARTPQMGWNSYNYYSCSPNEAIIRSNAKALVDLGLAELGYRYVTTDCGWSVADRLPNGTLTWNETLFPSGFPAMGEYLHELGLLFGVYGDSGTKLCGSPPDQVGSLYHEEQDAKTFAEWGADSLKYDNCYSDAATNYPNVNYEPSTSPRPRYEIMSSALARVGRPILFQICEWGIDFPALWAPALGNSWRIGNDIIPAWRSIFRTLNQAVPNTDFAGPGQWADLDMLYVGNGVFSLPEEQTHFSLWAILKSPLTIGAALKDDDTSISQASLEVLKQKDVIGFNQDALGVSASLKRRWSDEGYEVWSGPLSGNRTVVAVINWRNESRDLTLDLPDVGLQYAQVARNIWGKTVVRDVRTSYTAGVAGHGTILLELQGTLPSGLYPAKIFAKSTGQRSTFESIYAATTSANYELAITFSRPSTETVTITTSSGQTVSISGKSGRIALTAGSNTITIQHKTPIESIQITPPTGTYYANTVFNVTGSAKHTTCGSGCSPVGSKIGYLSPTSNAYTSISTTTAGSKYLAIDYINNEVAFSSSWGWGSNSRNLTVSVNDGAPVRLEVPLSGRHSELYSPGKGWWDTATLGVLTSGWKKGENKVVFGNEGGEDGFQTYAADFVGVRVLD.

The first 16 residues, 1–16 (MEFIVSLLLLSPALVA), serve as a signal peptide directing secretion. 2 N-linked (GlcNAc...) asparagine glycosylation sites follow: Asn-84 and Asn-90. A disulfide bond links Cys-123 and Cys-156. The active-site Nucleophile is Asp-154. 199 to 203 (EWGID) is a binding site for substrate. Asp-221 serves as the catalytic Proton donor. 4 N-linked (GlcNAc...) asparagine glycosylation sites follow: Asn-339, Asn-350, Asn-505, and Asn-572.

It belongs to the glycosyl hydrolase 27 family.

Its subcellular location is the secreted. The catalysed reaction is Hydrolysis of terminal, non-reducing alpha-D-galactose residues in alpha-D-galactosides, including galactose oligosaccharides, galactomannans and galactolipids.. Its function is as follows. Hydrolyzes a variety of simple alpha-D-galactoside as well as more complex molecules such as oligosaccharides and polysaccharides. In Aspergillus fumigatus (strain CBS 144.89 / FGSC A1163 / CEA10) (Neosartorya fumigata), this protein is Probable alpha-galactosidase D (aglD).